The primary structure comprises 293 residues: MSEDSQRNFRSVYYEKVGFRGVEEKKSLEILLKDDRLDIEKLCTFSQRFPLPSMYRILVWKVLLGILPHHQESHPMVMEYRREQYQDVYHALQVIHFISEATPKIEVFLYMYHLETGKLSQSQPYPMEPEDDIFLAIASTMEEMVDDDVDCYWLIRNFVNHFDSKFKDSKLQLHKAFEHYLNLEDSRLVAHLKASSALEKLPYDLWFKKCFAGCLSASSLQRVWDKLVSGSCKILVFVAVEILLTYKLKVTALNNAESINKFLEKIPEDNTDPIVSKAIDLWHKHCGIPAHSI.

The region spanning 50–231 (PLPSMYRILV…RVWDKLVSGS (182 aa)) is the Rab-GAP TBC domain.

Component of the TSC-TBC complex (also named Rhebulator complex), composed of 2 molecules of TSC1, 2 molecules of TSC2 and 1 molecule of TBC1D7.

It localises to the lysosome membrane. The protein resides in the cytoplasmic vesicle. The protein localises to the cytoplasm. It is found in the cytosol. In terms of biological role, non-catalytic component of the TSC-TBC complex, a multiprotein complex that acts as a negative regulator of the canonical mTORC1 complex, an evolutionarily conserved central nutrient sensor that stimulates anabolic reactions and macromolecule biosynthesis to promote cellular biomass generation and growth. The TSC-TBC complex acts as a GTPase-activating protein (GAP) for the small GTPase RHEB, a direct activator of the protein kinase activity of mTORC1. In absence of nutrients, the TSC-TBC complex inhibits mTORC1, thereby preventing phosphorylation of ribosomal protein S6 kinase (RPS6KB1 and RPS6KB2) and EIF4EBP1 (4E-BP1) by the mTORC1 signaling. The TSC-TBC complex is inactivated in response to nutrients, relieving inhibition of mTORC1. The chain is TBC1 domain family member 7 (tbc1d7) from Xenopus tropicalis (Western clawed frog).